An 81-amino-acid polypeptide reads, in one-letter code: ATP synthase subunit c, chloroplastic (81 aa).

2 helical membrane-spanning segments follow: residues 3–23 and 57–77; these read PLVFAASVIAAGLAVGLASIG and LAFMEALTIYGLVVALALLFA.

This sequence belongs to the ATPase C chain family. F-type ATPases have 2 components, F(1) - the catalytic core - and F(0) - the membrane proton channel. F(1) has five subunits: alpha(3), beta(3), gamma(1), delta(1), epsilon(1). F(0) has four main subunits: a(1), b(1), b'(1) and c(10-14). The alpha and beta chains form an alternating ring which encloses part of the gamma chain. F(1) is attached to F(0) by a central stalk formed by the gamma and epsilon chains, while a peripheral stalk is formed by the delta, b and b' chains.

It localises to the plastid. The protein resides in the chloroplast thylakoid membrane. Functionally, f(1)F(0) ATP synthase produces ATP from ADP in the presence of a proton or sodium gradient. F-type ATPases consist of two structural domains, F(1) containing the extramembraneous catalytic core and F(0) containing the membrane proton channel, linked together by a central stalk and a peripheral stalk. During catalysis, ATP synthesis in the catalytic domain of F(1) is coupled via a rotary mechanism of the central stalk subunits to proton translocation. Its function is as follows. Key component of the F(0) channel; it plays a direct role in translocation across the membrane. A homomeric c-ring of between 10-14 subunits forms the central stalk rotor element with the F(1) delta and epsilon subunits. The sequence is that of ATP synthase subunit c, chloroplastic from Atropa belladonna (Belladonna).